The sequence spans 410 residues: Lipoyl synthase, mitochondrial (410 aa).

The N-terminal 29 residues, 1-29 (MASTTVCSAARIRVASSQVLRSIANTRTY), are a transit peptide targeting the mitochondrion. The segment covering 29–39 (YATTSPESSIP) has biased composition (polar residues). Residues 29–49 (YATTSPESSIPETKPTAKRTP) form a disordered region. Residues Cys-129, Cys-134, Cys-140, Cys-160, Cys-164, Cys-167, and Ser-375 each coordinate [4Fe-4S] cluster. One can recognise a Radical SAM core domain in the interval 143–364 (GGSKAAATAT…KEKAMEMGFL (222 aa)).

This sequence belongs to the radical SAM superfamily. Lipoyl synthase family. [4Fe-4S] cluster is required as a cofactor.

Its subcellular location is the mitochondrion. The enzyme catalyses [[Fe-S] cluster scaffold protein carrying a second [4Fe-4S](2+) cluster] + N(6)-octanoyl-L-lysyl-[protein] + 2 oxidized [2Fe-2S]-[ferredoxin] + 2 S-adenosyl-L-methionine + 4 H(+) = [[Fe-S] cluster scaffold protein] + N(6)-[(R)-dihydrolipoyl]-L-lysyl-[protein] + 4 Fe(3+) + 2 hydrogen sulfide + 2 5'-deoxyadenosine + 2 L-methionine + 2 reduced [2Fe-2S]-[ferredoxin]. The protein operates within protein modification; protein lipoylation via endogenous pathway; protein N(6)-(lipoyl)lysine from octanoyl-[acyl-carrier-protein]: step 2/2. Its function is as follows. Catalyzes the radical-mediated insertion of two sulfur atoms into the C-6 and C-8 positions of the octanoyl moiety bound to the lipoyl domains of lipoate-dependent enzymes, thereby converting the octanoylated domains into lipoylated derivatives. This Arthroderma otae (strain ATCC MYA-4605 / CBS 113480) (Microsporum canis) protein is Lipoyl synthase, mitochondrial.